Consider the following 413-residue polypeptide: Alpha-1-antitrypsin-like protein CM55-MS (413 aa).

The first 24 residues, 1-24 (MPSSISWGLLLLAALSCLGPGSLA), serve as a signal peptide directing secretion. Q25 carries the post-translational modification Pyrrolidone carboxylic acid. Residues N65, N102, N165, and N266 are each glycosylated (N-linked (GlcNAc...) asparagine). Residues 368–387 (GATVGGITFMSRPKEVIFDR) are RCL.

Belongs to the serpin family. As to expression, expressed in liver.

The protein localises to the secreted. Functionally, serine protease inhibitor. This Tamias sibiricus (Siberian chipmunk) protein is Alpha-1-antitrypsin-like protein CM55-MS.